We begin with the raw amino-acid sequence, 802 residues long: Peptidyl serine alpha-galactosyltransferase (802 aa).

Residues 1 to 19 form the signal peptide; the sequence is MRWDLITAIVAALVVSVLA. The Extracellular portion of the chain corresponds to 20-750; that stretch reads DESGQMAPYR…SEGRFSTLKL (731 aa). N-linked (GlcNAc...) asparagine glycosylation is found at N214, N275, N425, and N637. The interval 699 to 741 is disordered; sequence RNCPEPGSESTEKISVSRKVGNIETKQTQGSDETKESSGSSES. Residues 751 to 771 traverse the membrane as a helical segment; that stretch reads WVIALWLISGVGFLVVMLLVF. At 772–802 the chain is on the cytoplasmic side; that stretch reads STRRGRGTTRGKGYRNKRRTSYSNTGFLDTK. Positions 777-791 are enriched in basic residues; the sequence is RGTTRGKGYRNKRRT. The interval 777–802 is disordered; sequence RGTTRGKGYRNKRRTSYSNTGFLDTK. Polar residues predominate over residues 792–802; sequence SYSNTGFLDTK.

The protein resides in the endoplasmic reticulum membrane. Glycosyltransferase involved in the O-galactosylation of several proteins including extensins. Catalyzes the transfer of alpha-galactosyl to Ser residues. Hydroxylation of proline residues adjacent to the serine acceptor is required for activity. This is Peptidyl serine alpha-galactosyltransferase from Arabidopsis thaliana (Mouse-ear cress).